The primary structure comprises 376 residues: Nuclear hormone receptor family member nhr-124 (376 aa).

The segment at residues Pro11–Glu89 is a DNA-binding region (nuclear receptor). 2 consecutive NR C4-type zinc fingers follow at residues Cys14–Cys34 and Cys50–Cys72. The 247-residue stretch at His125–Arg371 folds into the NR LBD domain.

Belongs to the nuclear hormone receptor family.

The protein localises to the nucleus. Functionally, orphan nuclear receptor. This Caenorhabditis elegans protein is Nuclear hormone receptor family member nhr-124 (nhr-124).